We begin with the raw amino-acid sequence, 370 residues long: DNA replication and repair protein RecF (370 aa).

Position 30 to 37 (glycine 30 to threonine 37) interacts with ATP.

Belongs to the RecF family.

The protein localises to the cytoplasm. Its function is as follows. The RecF protein is involved in DNA metabolism; it is required for DNA replication and normal SOS inducibility. RecF binds preferentially to single-stranded, linear DNA. It also seems to bind ATP. The sequence is that of DNA replication and repair protein RecF from Bacillus velezensis (strain DSM 23117 / BGSC 10A6 / LMG 26770 / FZB42) (Bacillus amyloliquefaciens subsp. plantarum).